The chain runs to 239 residues: Orotidine 5'-phosphate decarboxylase (239 aa).

Residues aspartate 15, lysine 36, 63 to 72, threonine 127, arginine 189, glutamine 198, glycine 218, and arginine 219 contribute to the substrate site; that span reads DLKFHDIPNT. Catalysis depends on lysine 65, which acts as the Proton donor.

It belongs to the OMP decarboxylase family. Type 1 subfamily. Homodimer.

It catalyses the reaction orotidine 5'-phosphate + H(+) = UMP + CO2. The protein operates within pyrimidine metabolism; UMP biosynthesis via de novo pathway; UMP from orotate: step 2/2. In terms of biological role, catalyzes the decarboxylation of orotidine 5'-monophosphate (OMP) to uridine 5'-monophosphate (UMP). The sequence is that of Orotidine 5'-phosphate decarboxylase from Prochlorococcus marinus subsp. pastoris (strain CCMP1986 / NIES-2087 / MED4).